The sequence spans 178 residues: PRA1 family protein 2 (178 aa).

Over 1 to 41 the chain is Cytoplasmic; it reads MSEVRLPPLRALDDFVLGSARLVAPDPCDPQRWCHRVINNL. A helical membrane pass occupies residues 42 to 62; it reads LYYQTNYLICFGLGLALAGYV. The Extracellular portion of the chain corresponds to 63–64; the sequence is RP. Residues 65-85 form a helical membrane-spanning segment; it reads LHTLLSALVVAVALGMLVCAA. The Cytoplasmic segment spans residues 86–96; sequence ENRAAVRRCRR. A helical membrane pass occupies residues 97-119; that stretch reads SHPAACLAAVLAVGFLVLWAAGG. Topologically, residues 120 to 122 are extracellular; it reads AGT. The chain crosses the membrane as a helical span at residues 123 to 140; that stretch reads FLLSIAGPVLLILVHASL. The Cytoplasmic segment spans residues 141–178; it reads RLRNLKNKIENKIESIGLKRTPMGLLLEALGQEQEAGS.

It belongs to the PRA1 family. In terms of assembly, interacts with CCR5 and GDE1.

It is found in the endosome membrane. May be involved in ER/Golgi transport and vesicular traffic. Plays a proapoptotic role in cerulenin-induced neuroblastoma apoptosis. The polypeptide is PRA1 family protein 2 (PRAF2) (Bos taurus (Bovine)).